Consider the following 190-residue polypeptide: Large ribosomal subunit protein bL17 (190 aa).

A compositionally biased stretch (low complexity) spans 135 to 165; that stretch reads AKAAPAAEEAPAEEAPAAEEAATEEAPAAEE. The disordered stretch occupies residues 135–190; it reads AKAAPAAEEAPAEEAPAAEEAATEEAPAAEETATEEAAAEEAPAAEEAPAEEKDAK.

Belongs to the bacterial ribosomal protein bL17 family. In terms of assembly, part of the 50S ribosomal subunit. Contacts protein L32.

The polypeptide is Large ribosomal subunit protein bL17 (Pseudarthrobacter chlorophenolicus (strain ATCC 700700 / DSM 12829 / CIP 107037 / JCM 12360 / KCTC 9906 / NCIMB 13794 / A6) (Arthrobacter chlorophenolicus)).